Reading from the N-terminus, the 217-residue chain is Elongation factor Ts (217 aa).

Positions 80 to 83 are involved in Mg(2+) ion dislocation from EF-Tu; that stretch reads TDFV.

Belongs to the EF-Ts family.

The protein resides in the cytoplasm. In terms of biological role, associates with the EF-Tu.GDP complex and induces the exchange of GDP to GTP. It remains bound to the aminoacyl-tRNA.EF-Tu.GTP complex up to the GTP hydrolysis stage on the ribosome. This chain is Elongation factor Ts, found in Carboxydothermus hydrogenoformans (strain ATCC BAA-161 / DSM 6008 / Z-2901).